The primary structure comprises 404 residues: Glucose-1-phosphate adenylyltransferase (404 aa).

Residues Tyr-99, Gly-164, 179–180 (EK), and Ser-197 contribute to the alpha-D-glucose 1-phosphate site.

Belongs to the bacterial/plant glucose-1-phosphate adenylyltransferase family.

It catalyses the reaction alpha-D-glucose 1-phosphate + ATP + H(+) = ADP-alpha-D-glucose + diphosphate. The protein operates within capsule biogenesis; capsule polysaccharide biosynthesis. Its pathway is glycan biosynthesis; glycogen biosynthesis. Its function is as follows. Involved in the biosynthesis of ADP-glucose, a building block, required in the biosynthesis of maltose-1-phosphate (M1P) and in the elongation reactions to produce linear alpha-1,4-glucans. Catalyzes the reaction between ATP and alpha-D-glucose 1-phosphate (G1P) to produce pyrophosphate and ADP-Glc. In Mycobacterium leprae (strain Br4923), this protein is Glucose-1-phosphate adenylyltransferase.